A 62-amino-acid chain; its full sequence is Large ribosomal subunit protein bL32 (62 aa).

Residues 1–20 are disordered; it reads MAVPARHTSKQKKRSRRGHI. Residues 7-20 show a composition bias toward basic residues; sequence HTSKQKKRSRRGHI.

Belongs to the bacterial ribosomal protein bL32 family.

The sequence is that of Large ribosomal subunit protein bL32 from Lactobacillus acidophilus (strain ATCC 700396 / NCK56 / N2 / NCFM).